Reading from the N-terminus, the 271-residue chain is Coiled-coil domain-containing protein ORF29 (271 aa).

The tract at residues 1 to 39 is disordered; that stretch reads MNEKTESEIFEEQNSLYKPIKQEKKTPSTPESEDKNDQS. Over residues 20–37 the composition is skewed to basic and acidic residues; sequence IKQEKKTPSTPESEDKND. A coiled-coil region spans residues 208 to 228; sequence RATQTQEILLNSLRKNLQMLE.

In Helicobacter pylori (strain 35A), this protein is Coiled-coil domain-containing protein ORF29.